We begin with the raw amino-acid sequence, 237 residues long: Large ribosomal subunit protein uL1 (237 aa).

It belongs to the universal ribosomal protein uL1 family. Part of the 50S ribosomal subunit.

Its function is as follows. Binds directly to 23S rRNA. The L1 stalk is quite mobile in the ribosome, and is involved in E site tRNA release. In terms of biological role, protein L1 is also a translational repressor protein, it controls the translation of the L11 operon by binding to its mRNA. This chain is Large ribosomal subunit protein uL1, found in Dehalococcoides mccartyi (strain CBDB1).